The following is a 164-amino-acid chain: Type II secretion system protein M (164 aa).

Residues 1 to 17 (MNELRQRWQAMSQRERQ) are Cytoplasmic-facing. A helical transmembrane segment spans residues 18–38 (LMVVCAAVLLLCVVYYAILQP). Over 39–164 (WQEREDLWER…RLMLERTDEA (126 aa)) the chain is Periplasmic.

This sequence belongs to the GSP M family. In terms of assembly, type II secretion system is composed of four main components: the outer membrane complex, the inner membrane complex, the cytoplasmic secretion ATPase and the periplasm-spanning pseudopilus. Forms homodimers. Interacts with OutL/GspL. Interacts with OutE/GspE and OutF/GspF.

The protein localises to the cell inner membrane. Functionally, inner membrane component of the type II secretion system required for the energy-dependent secretion of extracellular factors such as proteases and toxins from the periplasm. Plays a role in the complex assembly and recruits OutL resulting in a stable complex in the inner membrane. Provides thus a link between the energy-providing OutE protein in the cytoplasm and the rest of the T2SS machinery. The polypeptide is Type II secretion system protein M (outM) (Pectobacterium carotovorum subsp. carotovorum (Erwinia carotovora subsp. carotovora)).